We begin with the raw amino-acid sequence, 286 residues long: ATP synthase gamma chain (286 aa).

This sequence belongs to the ATPase gamma chain family. F-type ATPases have 2 components, CF(1) - the catalytic core - and CF(0) - the membrane proton channel. CF(1) has five subunits: alpha(3), beta(3), gamma(1), delta(1), epsilon(1). CF(0) has three main subunits: a, b and c.

The protein resides in the cell inner membrane. Produces ATP from ADP in the presence of a proton gradient across the membrane. The gamma chain is believed to be important in regulating ATPase activity and the flow of protons through the CF(0) complex. This Shewanella denitrificans (strain OS217 / ATCC BAA-1090 / DSM 15013) protein is ATP synthase gamma chain.